A 558-amino-acid chain; its full sequence is MARVEL domain-containing protein 2 (558 aa).

The segment covering 1-16 (MSNDGRSRNRDRRYDE) has biased composition (basic and acidic residues). Disordered regions lie at residues 1–58 (MSND…PPFG) and 115–145 (CSPP…GTFS). The Cytoplasmic portion of the chain corresponds to 1-194 (MSNDGRSRNR…YMKSWAGLLR (194 aa)). The span at 45–58 (PLPPPPLPLQPPFG) shows a compositional bias: pro residues. Phosphoserine occurs at positions 116, 120, and 161. Thr166 is modified (phosphothreonine). The MARVEL domain maps to 188–367 (SWAGLLRILG…SALVCLKLWR (180 aa)). The helical transmembrane segment at 195 to 215 (ILGVVELLLGAGVFACVTAYI) threads the bilayer. Residues 216-223 (HKDSEWYN) are Extracellular-facing. A helical transmembrane segment spans residues 224 to 244 (LFGYSQPYGMGGVGGLGSMYG). Over 245-254 (GYYYTGPKTP) the chain is Cytoplasmic. The helical transmembrane segment at 255–275 (FVLVVAGLAWITTIIILVLGM) threads the bilayer. Over 276–291 (SMYYRTILLDSNWWPL) the chain is Extracellular. The chain crosses the membrane as a helical span at residues 292 to 312 (TEFGINVALFILYMAAAIVYV). At 313 to 319 (NDTNRGG) the chain is on the cytoplasmic side. The helical transmembrane segment at 320 to 337 (LCYYPLFNTPVNAVFCRV) threads the bilayer. Residues 338–341 (EGGQ) lie on the Extracellular side of the membrane. Residues 342-362 (IAAMIFLFVTMIVYLISALVC) traverse the membrane as a helical segment. Over 363-558 (LKLWRHEAAR…VMNWDVQGYS (196 aa)) the chain is Cytoplasmic. A Phosphoserine modification is found at Ser387. A Glycyl lysine isopeptide (Lys-Gly) (interchain with G-Cter in ubiquitin) cross-link involves residue Lys412. Positions 439–548 (MPDYVAKYPV…IKQRIQEYDK (110 aa)) form a coiled coil. An OCEL domain is found at 440–551 (PDYVAKYPVI…RIQEYDKVMN (112 aa)).

It belongs to the ELL/occludin family. As to quaternary structure, interacts with TJP1. Interacts with the ubiquitin ligase ITCH. Interacts (via C-terminal cytoplasmic domain) with LSR (via the cytoplasmic domain), ILDR1 and ILDR2; the interaction is required to recruit MARVELD2 to tricellular contacts. Post-translationally, ubiquitinated by ITCH; but this ubiquitination does not lead to proteasomal degradation. Polyubiquitinated at Lys-412 via 'Lys-63'-linked ubiquitin chains; deubiquitinated by USP53. Phosphorylated.

The protein localises to the cell membrane. The protein resides in the cell junction. Its subcellular location is the tight junction. Its function is as follows. Plays a role in the formation of tricellular tight junctions and of epithelial barriers. Required for normal hearing via its role in the separation of the endolymphatic and perilymphatic spaces of the organ of Corti in the inner ear, and for normal survival of hair cells in the organ of Corti. This is MARVEL domain-containing protein 2 from Homo sapiens (Human).